The sequence spans 292 residues: WRKY transcription factor 55 (292 aa).

Positions Val133 to Glu155 are disordered. The segment at residues Asn167–Ser235 is a DNA-binding region (WRKY).

It belongs to the WRKY group III family.

Its subcellular location is the nucleus. Its function is as follows. Transcription factor. Interacts specifically with the W box (5'-(T)TGAC[CT]-3'), a frequently occurring elicitor-responsive cis-acting element. In Arabidopsis thaliana (Mouse-ear cress), this protein is WRKY transcription factor 55 (WRKY55).